The chain runs to 311 residues: Protein translocase subunit SecF (311 aa).

Helical transmembrane passes span 23 to 42 (VSYSFSIILSLISLIWISIY), 140 to 160 (IEAGAMAMLFSFLAIMVYIGV), 164 to 184 (WYFGFGILIALVHDVILALGF), 194 to 214 (LSTIAAVLTIIGYSVNDSVVI), 246 to 266 (ILTVITTLLANLALILFGGKA), and 272 to 292 (VLVFFGIIAGTYSSIFISAPI).

It belongs to the SecD/SecF family. SecF subfamily. Forms a complex with SecD. Part of the essential Sec protein translocation apparatus which comprises SecA, SecYEG and auxiliary proteins SecDF-YajC and YidC.

It localises to the cell inner membrane. Its function is as follows. Part of the Sec protein translocase complex. Interacts with the SecYEG preprotein conducting channel. SecDF uses the proton motive force (PMF) to complete protein translocation after the ATP-dependent function of SecA. This is Protein translocase subunit SecF from Rickettsia prowazekii (strain Madrid E).